Reading from the N-terminus, the 589-residue chain is V-type ATP synthase alpha chain (589 aa).

239-246 provides a ligand contact to ATP; that stretch reads GPFGAGKT.

This sequence belongs to the ATPase alpha/beta chains family.

It catalyses the reaction ATP + H2O + 4 H(+)(in) = ADP + phosphate + 5 H(+)(out). Produces ATP from ADP in the presence of a proton gradient across the membrane. The V-type alpha chain is a catalytic subunit. This Treponema denticola (strain ATCC 35405 / DSM 14222 / CIP 103919 / JCM 8153 / KCTC 15104) protein is V-type ATP synthase alpha chain.